A 162-amino-acid chain; its full sequence is Protein SLM4 (162 aa).

Residues 127–144 form a helical membrane-spanning segment; that stretch reads LLLLFIAEGSFPYGLLVI.

Component of the GSE complex composed of GTR1, GTR2, SLM4, MEH1 and LTV1. Component of the EGO complex, at least composed of GTR2, SLM4 and MEH1.

The protein localises to the vacuole membrane. Component of the GSE complex, a GTPase complex required for intracellular sorting of GAP1 out of the endosome. Component of the EGO complex, a complex involved in the regulation of microautophagy. The protein is Protein SLM4 (SLM4) of Saccharomyces cerevisiae (strain ATCC 204508 / S288c) (Baker's yeast).